A 244-amino-acid polypeptide reads, in one-letter code: Electron transfer flavoprotein beta subunit lysine methyltransferase homolog (244 aa).

This sequence belongs to the methyltransferase superfamily. ETFBKMT family.

Its function is as follows. Probable methyltransferase. In Caenorhabditis elegans, this protein is Electron transfer flavoprotein beta subunit lysine methyltransferase homolog.